Here is a 155-residue protein sequence, read N- to C-terminus: Small ribosomal subunit protein uS7c (155 aa).

Belongs to the universal ribosomal protein uS7 family. Part of the 30S ribosomal subunit.

The protein localises to the plastid. The protein resides in the chloroplast. In terms of biological role, one of the primary rRNA binding proteins, it binds directly to 16S rRNA where it nucleates assembly of the head domain of the 30S subunit. This is Small ribosomal subunit protein uS7c (rps7) from Sagittaria latifolia (Broadleaf arrowhead).